The chain runs to 347 residues: tRNA N6-adenosine threonylcarbamoyltransferase (347 aa).

The Fe cation site is built by histidine 111 and histidine 115. Residues 134-138 (LVSGG), aspartate 167, glycine 180, and asparagine 277 each bind substrate. Aspartate 305 provides a ligand contact to Fe cation.

This sequence belongs to the KAE1 / TsaD family. Requires Fe(2+) as cofactor.

It localises to the cytoplasm. It catalyses the reaction L-threonylcarbamoyladenylate + adenosine(37) in tRNA = N(6)-L-threonylcarbamoyladenosine(37) in tRNA + AMP + H(+). Functionally, required for the formation of a threonylcarbamoyl group on adenosine at position 37 (t(6)A37) in tRNAs that read codons beginning with adenine. Is involved in the transfer of the threonylcarbamoyl moiety of threonylcarbamoyl-AMP (TC-AMP) to the N6 group of A37, together with TsaE and TsaB. TsaD likely plays a direct catalytic role in this reaction. This chain is tRNA N6-adenosine threonylcarbamoyltransferase, found in Ralstonia pickettii (strain 12J).